The chain runs to 86 residues: Small ribosomal subunit protein uS17 (86 aa).

The protein belongs to the universal ribosomal protein uS17 family. As to quaternary structure, part of the 30S ribosomal subunit.

Its function is as follows. One of the primary rRNA binding proteins, it binds specifically to the 5'-end of 16S ribosomal RNA. The polypeptide is Small ribosomal subunit protein uS17 (Tropheryma whipplei (strain TW08/27) (Whipple's bacillus)).